The primary structure comprises 120 residues: Large ribosomal subunit protein uL18 (120 aa).

This sequence belongs to the universal ribosomal protein uL18 family. In terms of assembly, part of the 50S ribosomal subunit; part of the 5S rRNA/L5/L18/L25 subcomplex. Contacts the 5S and 23S rRNAs.

This is one of the proteins that bind and probably mediate the attachment of the 5S RNA into the large ribosomal subunit, where it forms part of the central protuberance. The chain is Large ribosomal subunit protein uL18 from Rhizobium leguminosarum bv. trifolii (strain WSM2304).